We begin with the raw amino-acid sequence, 210 residues long: Ribosomal RNA large subunit methyltransferase E (210 aa).

S-adenosyl-L-methionine-binding residues include glycine 60, tryptophan 62, aspartate 80, aspartate 96, and aspartate 121. The active-site Proton acceptor is lysine 161.

The protein belongs to the class I-like SAM-binding methyltransferase superfamily. RNA methyltransferase RlmE family.

It is found in the cytoplasm. It carries out the reaction uridine(2552) in 23S rRNA + S-adenosyl-L-methionine = 2'-O-methyluridine(2552) in 23S rRNA + S-adenosyl-L-homocysteine + H(+). In terms of biological role, specifically methylates the uridine in position 2552 of 23S rRNA at the 2'-O position of the ribose in the fully assembled 50S ribosomal subunit. This Vesicomyosocius okutanii subsp. Calyptogena okutanii (strain HA) protein is Ribosomal RNA large subunit methyltransferase E.